The following is a 1197-amino-acid chain: ATP-dependent helicase/nuclease subunit A (1197 aa).

The region spanning 2-458 (RQWTKEQQAA…IDLAKNFRSR (457 aa)) is the UvrD-like helicase ATP-binding domain. An ATP-binding site is contributed by 23-30 (AAAGSGKT). The UvrD-like helicase C-terminal domain occupies 485 to 774 (RAALYQGTEF…RIMSIHKSKG (290 aa)).

This sequence belongs to the helicase family. AddA subfamily. In terms of assembly, heterodimer of AddA and AddB/RexB. Mg(2+) serves as cofactor.

It carries out the reaction Couples ATP hydrolysis with the unwinding of duplex DNA by translocating in the 3'-5' direction.. The catalysed reaction is ATP + H2O = ADP + phosphate + H(+). The heterodimer acts as both an ATP-dependent DNA helicase and an ATP-dependent, dual-direction single-stranded exonuclease. Recognizes the chi site generating a DNA molecule suitable for the initiation of homologous recombination. The AddA nuclease domain is required for chi fragment generation; this subunit has the helicase and 3' -&gt; 5' nuclease activities. This Alkaliphilus oremlandii (strain OhILAs) (Clostridium oremlandii (strain OhILAs)) protein is ATP-dependent helicase/nuclease subunit A.